A 132-amino-acid chain; its full sequence is ATP synthase epsilon chain (132 aa).

The protein belongs to the ATPase epsilon chain family. In terms of assembly, F-type ATPases have 2 components, CF(1) - the catalytic core - and CF(0) - the membrane proton channel. CF(1) has five subunits: alpha(3), beta(3), gamma(1), delta(1), epsilon(1). CF(0) has three main subunits: a, b and c.

The protein localises to the cell inner membrane. Its function is as follows. Produces ATP from ADP in the presence of a proton gradient across the membrane. The polypeptide is ATP synthase epsilon chain (Anaeromyxobacter dehalogenans (strain 2CP-C)).